Reading from the N-terminus, the 353-residue chain is MTEPLKPRIDFDGPLEVEQNPKFRAQQTFDENQAQNFAPATLDEAQEEEGQVEAVMDAALRPKRSLWRKMVMGGLALFGASVVGQGIQWTMNAWQTQDWVALGGCAAGALIIGAGVGSVVTEWRRLWRLRQRAHERDEARDLLHSHGTGKGRAFCEKLAQQAGIDQSHPALQRWYASIHETQNDREVVSLYAHLVQPVLDAQARREISRSAAESTLMIAVSPLALVDMAFIAWRNLRLINRIATLYGIELGYYSRLRLFKLVLLNIAFAGASELVREVGMDWMSQDLAARLSTRAAQGIGAGLLTVRLGIKAMELCRPLPWIDDDKPRLGDFRRQLIGQVKETLQKGKTPSEK.

Helical transmembrane passes span 70 to 90 (MVMG…IQWT), 100 to 120 (VALG…GSVV), and 213 to 233 (ESTL…FIAW).

Belongs to the UPF0283 family.

It is found in the cell inner membrane. This Shigella flexneri serotype 5b (strain 8401) protein is UPF0283 membrane protein YcjF.